The sequence spans 932 residues: RNA-binding protein 12 (932 aa).

Positions I97–R116 are disordered. The span at P98 to R116 shows a compositional bias: low complexity. Residues L304–E379 enclose the RRM 1 domain. 2 positions are modified to phosphoserine: S352 and S375. The segment at Q393–S424 is disordered. Positions L408–Q417 are enriched in polar residues. Phosphoserine is present on residues S420, S422, and S424. The RRM 2 domain maps to F430–K507. S525 bears the Phosphoserine mark. A compositionally biased stretch (low complexity) spans N717 to G734. Positions N717 to P853 are disordered. Residues S783–G811 are compositionally biased toward gly residues. Positions A824–G836 are enriched in pro residues. An RRM 3 domain is found at T856 to G932.

It localises to the nucleus. This is RNA-binding protein 12 (RBM12) from Macaca mulatta (Rhesus macaque).